Consider the following 510-residue polypeptide: DNA-directed RNA polymerase I subunit RPA34 (510 aa).

Methionine 1 carries the N-acetylmethionine modification. The interval 1 to 31 (MEEPQAGDAARFSCPPNFTAKPPASESPRFS) is disordered. Serine 27 bears the Phosphoserine mark. At tyrosine 80 the chain carries Phosphotyrosine. The segment at 120-143 (GPQQSLSGSPLQPIPASPPPQIPP) is disordered. A phosphoserine mark is found at serine 128, serine 136, serine 172, and serine 205. Residues 131–143 (QPIPASPPPQIPP) show a composition bias toward pro residues. The disordered stretch occupies residues 203–510 (LGSPEMDVRK…KRKQQQQQPV (308 aa)). Positions 258 to 270 (GKETFEPEDKTVK) are enriched in basic and acidic residues. A Glycyl lysine isopeptide (Lys-Gly) (interchain with G-Cter in SUMO1); alternate cross-link involves residue lysine 270. Lysine 270 participates in a covalent cross-link: Glycyl lysine isopeptide (Lys-Gly) (interchain with G-Cter in SUMO2); alternate. Serine 285 carries the phosphoserine modification. Residue threonine 287 is modified to Phosphothreonine. A Phosphoserine modification is found at serine 309. Lysine 314 participates in a covalent cross-link: Glycyl lysine isopeptide (Lys-Gly) (interchain with G-Cter in SUMO1); alternate. Lysine 314 participates in a covalent cross-link: Glycyl lysine isopeptide (Lys-Gly) (interchain with G-Cter in SUMO2); alternate. Composition is skewed to low complexity over residues 372–382 (AKPQAQAALAA) and 394–407 (DATVEPETEVVGPE). The span at 421–430 (TKKKKKKKER) shows a compositional bias: basic residues. Over residues 436-452 (EPIQPLEPELPGEGQPE) the composition is skewed to low complexity. Serine 490 carries the phosphoserine modification.

It belongs to the eukaryotic RPA34 RNA polymerase subunit family. In terms of assembly, component of the RNA polymerase I (Pol I) complex consisting of 13 subunits: a ten-subunit catalytic core composed of POLR1A/RPA1, POLR1B/RPA2, POLR1C/RPAC1, POLR1D/RPAC2, POLR1H/RPA12, POLR2E/RPABC1, POLR2F/RPABC2, POLR2H/RPABC3, POLR2K/RPABC4 and POLR2L/RPABC5; a mobile stalk subunit POLR1F/RPA43 protruding from the core and additional subunits homologous to general transcription factors POLR1E/RPA49 and POLR1G/RPA34. Forms a heterodimer with POLR1E/RPA49. Part of Pol I pre-initiation complex (PIC), in which Pol I core assembles with RRN3 and promoter-bound UTBF and SL1/TIF-IB complex. Interacts with TAF1A thereby associates with the SL1/TIF-IB complex. Interacts with UBTF. Interacts with POLR1E/PRAF1 through its N-terminal region. Interacts with CD3E. Post-translationally, undergoes tyrosine phosphorylation upon T-cell receptor (TCR) stimulation. This phosphorylation has not been confirmed by other groups. In terms of processing, phosphorylated on tyrosine residues in initiation-competent Pol I-beta complexes but not in Pol I-alpha complexes.

The protein localises to the nucleus. It localises to the nucleolus. It is found in the chromosome. Component of RNA polymerase I (Pol I), a DNA-dependent RNA polymerase which synthesizes ribosomal RNA precursors using the four ribonucleoside triphosphates as substrates. Involved in UBTF-activated transcription, presumably at a step following PIC formation. In terms of biological role, has been described as a component of preformed T-cell receptor (TCR) complex. The sequence is that of DNA-directed RNA polymerase I subunit RPA34 from Homo sapiens (Human).